We begin with the raw amino-acid sequence, 271 residues long: Enolase-phosphatase E1 (271 aa).

Mg(2+)-binding residues include D18 and E20. Substrate-binding positions include 144–145 and K194; that span reads SS. D221 is a binding site for Mg(2+).

The protein belongs to the HAD-like hydrolase superfamily. MasA/MtnC family. In terms of assembly, monomer. The cofactor is Mg(2+).

It localises to the cytoplasm. It is found in the nucleus. It carries out the reaction 5-methylsulfanyl-2,3-dioxopentyl phosphate + H2O = 1,2-dihydroxy-5-(methylsulfanyl)pent-1-en-3-one + phosphate. The protein operates within amino-acid biosynthesis; L-methionine biosynthesis via salvage pathway; L-methionine from S-methyl-5-thio-alpha-D-ribose 1-phosphate: step 3/6. It functions in the pathway amino-acid biosynthesis; L-methionine biosynthesis via salvage pathway; L-methionine from S-methyl-5-thio-alpha-D-ribose 1-phosphate: step 4/6. In terms of biological role, bifunctional enzyme that catalyzes the enolization of 2,3-diketo-5-methylthiopentyl-1-phosphate (DK-MTP-1-P) into the intermediate 2-hydroxy-3-keto-5-methylthiopentenyl-1-phosphate (HK-MTPenyl-1-P), which is then dephosphorylated to form the acireductone 1,2-dihydroxy-3-keto-5-methylthiopentene (DHK-MTPene). This chain is Enolase-phosphatase E1, found in Candida albicans (strain WO-1) (Yeast).